Consider the following 485-residue polypeptide: Acetyl-coenzyme A carboxylase carboxyl transferase subunit beta, chloroplastic (485 aa).

Positions 218–485 (LWIQCDNCYA…FFPLNKNEIK (268 aa)) constitute a CoA carboxyltransferase N-terminal domain. Zn(2+) contacts are provided by cysteine 222, cysteine 225, cysteine 241, and cysteine 244. Residues 222 to 244 (CDNCYALIYKKALKFKMNVCEQC) form a C4-type zinc finger.

It belongs to the AccD/PCCB family. As to quaternary structure, acetyl-CoA carboxylase is a heterohexamer composed of biotin carboxyl carrier protein, biotin carboxylase and 2 subunits each of ACCase subunit alpha and ACCase plastid-coded subunit beta (accD). It depends on Zn(2+) as a cofactor.

The protein resides in the plastid. It localises to the chloroplast stroma. The catalysed reaction is N(6)-carboxybiotinyl-L-lysyl-[protein] + acetyl-CoA = N(6)-biotinyl-L-lysyl-[protein] + malonyl-CoA. It functions in the pathway lipid metabolism; malonyl-CoA biosynthesis; malonyl-CoA from acetyl-CoA: step 1/1. Component of the acetyl coenzyme A carboxylase (ACC) complex. Biotin carboxylase (BC) catalyzes the carboxylation of biotin on its carrier protein (BCCP) and then the CO(2) group is transferred by the transcarboxylase to acetyl-CoA to form malonyl-CoA. The chain is Acetyl-coenzyme A carboxylase carboxyl transferase subunit beta, chloroplastic from Aethionema cordifolium (Lebanon stonecress).